The chain runs to 129 residues: Large ribosomal subunit protein bL19 (129 aa).

The protein belongs to the bacterial ribosomal protein bL19 family.

Its function is as follows. This protein is located at the 30S-50S ribosomal subunit interface and may play a role in the structure and function of the aminoacyl-tRNA binding site. This chain is Large ribosomal subunit protein bL19, found in Methylobacillus flagellatus (strain ATCC 51484 / DSM 6875 / VKM B-1610 / KT).